A 446-amino-acid chain; its full sequence is Histidine--tRNA ligase (446 aa).

The protein belongs to the class-II aminoacyl-tRNA synthetase family. In terms of assembly, homodimer.

The protein localises to the cytoplasm. The enzyme catalyses tRNA(His) + L-histidine + ATP = L-histidyl-tRNA(His) + AMP + diphosphate + H(+). This chain is Histidine--tRNA ligase, found in Burkholderia pseudomallei (strain 1710b).